The primary structure comprises 882 residues: Probable LRR receptor-like serine/threonine-protein kinase At1g12460 (882 aa).

The first 21 residues, 1–21 (MRKVHLFLVLVHFIYISTSRS), serve as a signal peptide directing secretion. Residues 22–515 (DSISERDILL…SRNSDALSIS (494 aa)) lie on the Extracellular side of the membrane. A glycan (N-linked (GlcNAc...) asparagine) is linked at N76. 16 LRR repeats span residues 92 to 113 (FIRV…DYFK), 116 to 138 (TLWT…ISEL), 140 to 162 (SLRF…LFKF), 165 to 187 (KTKF…IVNC), 189 to 210 (NLVG…RICD), 213 to 235 (VLEY…IQKC), 237 to 258 (RLIL…AVLT), 261 to 283 (NITY…VDCS), 285 to 308 (SLEF…MGCK), 309 to 331 (SLKL…IGKM), 333 to 355 (SLSV…IGSL), 357 to 379 (FLQV…ISNC), 381 to 404 (VLLE…LNLT), 405 to 427 (NIKI…LGNL), 429 to 451 (KVQF…LGSL), and 453 to 475 (TLTH…PMIQ). N121 carries an N-linked (GlcNAc...) asparagine glycan. N261 and N266 each carry an N-linked (GlcNAc...) asparagine glycan. N-linked (GlcNAc...) asparagine glycosylation is found at N321 and N341. N402, N417, and N426 each carry an N-linked (GlcNAc...) asparagine glycan. 2 N-linked (GlcNAc...) asparagine glycosylation sites follow: N458 and N463. A helical transmembrane segment spans residues 516–536 (VIIVIIAAAVILFGVCIVLAL). Residues 537–882 (NLRARKRRKD…LESIRNGFGS (346 aa)) lie on the Cytoplasmic side of the membrane. A Phosphothreonine modification is found at T589. A Protein kinase domain is found at 593-876 (LDKENIIGMG…AEVVQVLESI (284 aa)). Residues 599–607 (IGMGSIGSV) and K621 contribute to the ATP site. Y770 carries the post-translational modification Phosphotyrosine.

The protein belongs to the protein kinase superfamily. Ser/Thr protein kinase family.

Its subcellular location is the cell membrane. The enzyme catalyses L-seryl-[protein] + ATP = O-phospho-L-seryl-[protein] + ADP + H(+). It carries out the reaction L-threonyl-[protein] + ATP = O-phospho-L-threonyl-[protein] + ADP + H(+). This Arabidopsis thaliana (Mouse-ear cress) protein is Probable LRR receptor-like serine/threonine-protein kinase At1g12460.